The chain runs to 238 residues: Type III secretion protein hrcQa (238 aa).

The segment at 66–238 (DAEALLSLLG…SHEEHRHHEY (173 aa)) is hrcQa-C.

In terms of assembly, interacts with hrcQb.

It localises to the cell inner membrane. Its function is as follows. Component of the type III secretion system, which is required for effector protein delivery, parasitism, and pathogenicity. Probably participates in the formation of a C-ring-like assembly along with hrcQb. The sequence is that of Type III secretion protein hrcQa (hrcQa) from Pseudomonas savastanoi pv. phaseolicola (Pseudomonas syringae pv. phaseolicola).